Reading from the N-terminus, the 508-residue chain is NADH-quinone oxidoreductase subunit N 2 (508 aa).

14 helical membrane-spanning segments follow: residues 14-34 (SYVA…VIVL), 43-63 (SLVW…WYTA), 90-110 (FTFF…LLSA), 119-139 (GAHM…MFMV), 144-164 (LLTI…LAGI), 179-199 (FLTG…IYGV), 223-243 (GPAL…GFGF), 275-295 (GAAM…APFT), 298-318 (WALI…LVAL), 327-347 (MAYS…ASGL), 353-373 (ISSV…IFAV), 400-420 (AWAL…VGFL), 433-455 (GYLW…YYRV), and 473-493 (TGIS…TIFA).

This sequence belongs to the complex I subunit 2 family. NDH-1 is composed of 14 different subunits. Subunits NuoA, H, J, K, L, M, N constitute the membrane sector of the complex.

The protein localises to the cell membrane. The catalysed reaction is a quinone + NADH + 5 H(+)(in) = a quinol + NAD(+) + 4 H(+)(out). NDH-1 shuttles electrons from NADH, via FMN and iron-sulfur (Fe-S) centers, to quinones in the respiratory chain. The immediate electron acceptor for the enzyme in this species is believed to be a menaquinone. Couples the redox reaction to proton translocation (for every two electrons transferred, four hydrogen ions are translocated across the cytoplasmic membrane), and thus conserves the redox energy in a proton gradient. This Symbiobacterium thermophilum (strain DSM 24528 / JCM 14929 / IAM 14863 / T) protein is NADH-quinone oxidoreductase subunit N 2.